The primary structure comprises 247 residues: MRGLILALGFLTRLPLPVLRDFQCAELVRAVVWFPAAGLVVGAAVALAAALGTVLDPWLGALAGVVMWAWITGGLHLDGLADTADALGAAHRDPARFLTVLADPHVGSFGVIVLVLQLAAKLVLLHWLLTLDLPWPALVLIPAWTRWAAAGWTLLLPPLKPGLGERFAWQGNRAGWGAGGLALAAVSAITPIAFVALIPAVLWGVWMWLKLGGQTGDILGAGIEWSESAALLLAGVSLALARGIIAG.

The next 6 helical transmembrane spans lie at 31-51, 57-77, 109-129, 136-156, 189-209, and 218-238; these read VVWFPAAGLVVGAAVALAAAL, PWLGALAGVVMWAWITGGLHL, FGVIVLVLQLAAKLVLLHWLL, PALVLIPAWTRWAAAGWTLLL, ITPIAFVALIPAVLWGVWMWL, and ILGAGIEWSESAALLLAGVSL.

Belongs to the CobS family. Requires Mg(2+) as cofactor.

It localises to the cell inner membrane. It carries out the reaction alpha-ribazole + adenosylcob(III)inamide-GDP = adenosylcob(III)alamin + GMP + H(+). It catalyses the reaction alpha-ribazole 5'-phosphate + adenosylcob(III)inamide-GDP = adenosylcob(III)alamin 5'-phosphate + GMP + H(+). Its pathway is cofactor biosynthesis; adenosylcobalamin biosynthesis; adenosylcobalamin from cob(II)yrinate a,c-diamide: step 7/7. Functionally, joins adenosylcobinamide-GDP and alpha-ribazole to generate adenosylcobalamin (Ado-cobalamin). Also synthesizes adenosylcobalamin 5'-phosphate from adenosylcobinamide-GDP and alpha-ribazole 5'-phosphate. The polypeptide is Adenosylcobinamide-GDP ribazoletransferase (Thiobacillus denitrificans (strain ATCC 25259 / T1)).